A 168-amino-acid polypeptide reads, in one-letter code: Protein C2-DOMAIN ABA-RELATED 3 (168 aa).

The region spanning 1–106 is the C2 domain; sequence MSLMDNLLGI…IEALRMELSG (106 aa). Arg-24, Asp-25, Asp-30, Asp-76, His-77, Asp-78, and Asp-84 together coordinate Ca(2+).

Belongs to the plant CAR protein family. In terms of assembly, binds to PYR/PYL/RCAR abscisic acid intracellular receptors in an ABA-independent manner, both at the plasma membrane and in the nucleus. Ca(2+) serves as cofactor.

It localises to the cell membrane. It is found in the nucleus. In terms of biological role, stimulates the GTPase/ATPase activities of Obg-like ATPases. Mediates the transient calcium-dependent interaction of PYR/PYL/RCAR abscisic acid (ABA) receptors with the plasma membrane and thus regulates ABA sensitivity. This is Protein C2-DOMAIN ABA-RELATED 3 from Arabidopsis thaliana (Mouse-ear cress).